Consider the following 217-residue polypeptide: MSNTTIGKFITFEGNEGSGKTTQSKLLYEKLLDNGIKAVWTREIGGTDIAELIRDIVLFKDMSITTELLLIMAARYEHIEKFIRPNLNEGKWVICDRFIDSTLCYQSENSEEQQLILELHRKLLDNFFPDLTLIINVSPSIAMQRIKIREIHKNTNQLNKFDSRNQQFHQKITDAFIQVSKLFPERIVQINGEPMIEDVSSEVINIINNKMKVNLLR.

An ATP-binding site is contributed by 14–21 (GNEGSGKT).

This sequence belongs to the thymidylate kinase family.

It carries out the reaction dTMP + ATP = dTDP + ADP. Its function is as follows. Phosphorylation of dTMP to form dTDP in both de novo and salvage pathways of dTTP synthesis. The chain is Thymidylate kinase from Orientia tsutsugamushi (strain Ikeda) (Rickettsia tsutsugamushi).